The chain runs to 219 residues: Transmembrane protein 125 (219 aa).

4 helical membrane-spanning segments follow: residues 36-56 (LCFA…VALL), 68-88 (LAVG…QLMS), 114-134 (ALVV…LAGL), and 147-167 (MLSV…GLLL).

Its subcellular location is the membrane. The sequence is that of Transmembrane protein 125 (TMEM125) from Bos taurus (Bovine).